A 188-amino-acid polypeptide reads, in one-letter code: Inner membrane-spanning protein YciB (188 aa).

The next 5 membrane-spanning stretches (helical) occupy residues 23–43 (FQKA…IGYA), 49–69 (AMLP…GLIF), 73–93 (VFVK…LVGG), 116–133 (WRTL…VAII), and 149–169 (FRLA…PFMM).

The protein belongs to the YciB family.

Its subcellular location is the cell inner membrane. Functionally, plays a role in cell envelope biogenesis, maintenance of cell envelope integrity and membrane homeostasis. The sequence is that of Inner membrane-spanning protein YciB from Caulobacter vibrioides (strain ATCC 19089 / CIP 103742 / CB 15) (Caulobacter crescentus).